The sequence spans 413 residues: Peptidase T (413 aa).

Histidine 81 contacts Zn(2+). Aspartate 83 is an active-site residue. Aspartate 143 serves as a coordination point for Zn(2+). Glutamate 178 serves as the catalytic Proton acceptor. Glutamate 179, aspartate 201, and histidine 383 together coordinate Zn(2+).

This sequence belongs to the peptidase M20B family. In terms of assembly, homodimer. Requires Zn(2+) as cofactor.

It localises to the cytoplasm. The enzyme catalyses Release of the N-terminal residue from a tripeptide.. Inhibited by EDTA, by the reducing agents dithiothreitol and 13-mercaptoethanol, and by the divalent cation Cu(2+). Functionally, cleaves the N-terminal amino acid of tripeptides. Has a broad specificity for tripeptides with no clear preference for a particular tripeptide. Tripeptides with proline in the second position are an exception and are not hydrolyzed. Does not hydrolyze dipeptides, tetrapeptides, or oligopeptides. In Lactococcus lactis subsp. cremoris (Streptococcus cremoris), this protein is Peptidase T (pepT).